A 300-amino-acid polypeptide reads, in one-letter code: D-alanine--D-alanine ligase (300 aa).

The 195-residue stretch at 99 to 293 folds into the ATP-grasp domain; the sequence is KKILKYANIN…FAELLNSIVK (195 aa). 126–181 serves as a coordination point for ATP; sequence IEKIGYPVFVKPNSGGSSVATNLVKDKEGIKEAVELALKYDKEVMIENYTKGEEIT. Residues Asp-248, Glu-260, and Asn-262 each coordinate Mg(2+).

The protein belongs to the D-alanine--D-alanine ligase family. It depends on Mg(2+) as a cofactor. Requires Mn(2+) as cofactor.

Its subcellular location is the cytoplasm. The catalysed reaction is 2 D-alanine + ATP = D-alanyl-D-alanine + ADP + phosphate + H(+). It participates in cell wall biogenesis; peptidoglycan biosynthesis. Functionally, cell wall formation. This is D-alanine--D-alanine ligase from Clostridium botulinum (strain Okra / Type B1).